The chain runs to 152 residues: uncharacterized protein (152 aa).

The protein belongs to the antirestriction protein family.

This is an uncharacterized protein from Escherichia coli (strain K12).